A 335-amino-acid polypeptide reads, in one-letter code: Acetyl-coenzyme A carboxylase carboxyl transferase subunit alpha (335 aa).

The 255-residue stretch at 40–294 (QLETLAARRR…KEAIEKHLNA (255 aa)) folds into the CoA carboxyltransferase C-terminal domain.

The protein belongs to the AccA family. Acetyl-CoA carboxylase is a heterohexamer composed of biotin carboxyl carrier protein (AccB), biotin carboxylase (AccC) and two subunits each of ACCase subunit alpha (AccA) and ACCase subunit beta (AccD).

It is found in the cytoplasm. It catalyses the reaction N(6)-carboxybiotinyl-L-lysyl-[protein] + acetyl-CoA = N(6)-biotinyl-L-lysyl-[protein] + malonyl-CoA. It functions in the pathway lipid metabolism; malonyl-CoA biosynthesis; malonyl-CoA from acetyl-CoA: step 1/1. Component of the acetyl coenzyme A carboxylase (ACC) complex. First, biotin carboxylase catalyzes the carboxylation of biotin on its carrier protein (BCCP) and then the CO(2) group is transferred by the carboxyltransferase to acetyl-CoA to form malonyl-CoA. The chain is Acetyl-coenzyme A carboxylase carboxyl transferase subunit alpha from Prochlorococcus marinus (strain MIT 9215).